Here is a 493-residue protein sequence, read N- to C-terminus: Ketol-acid reductoisomerase (NADP(+)) (493 aa).

A KARI N-terminal Rossmann domain is found at 17–208; that stretch reads LSQCRFMDRS…GGDRAGVLHS (192 aa). Residues 45 to 48, Arg68, Arg76, Ser78, and 108 to 110 each bind NADP(+); these read CGAQ and DKQ. Residue His132 is part of the active site. Residue Gly158 participates in NADP(+) binding. KARI C-terminal knotted domains follow at residues 209–344 and 345–486; these read SFIA…NAPS and SNEH…MKDM. Asp217, Glu221, Glu389, and Glu393 together coordinate Mg(2+). Position 414 (Ser414) interacts with substrate.

This sequence belongs to the ketol-acid reductoisomerase family. Mg(2+) is required as a cofactor.

The enzyme catalyses (2R)-2,3-dihydroxy-3-methylbutanoate + NADP(+) = (2S)-2-acetolactate + NADPH + H(+). The catalysed reaction is (2R,3R)-2,3-dihydroxy-3-methylpentanoate + NADP(+) = (S)-2-ethyl-2-hydroxy-3-oxobutanoate + NADPH + H(+). It functions in the pathway amino-acid biosynthesis; L-isoleucine biosynthesis; L-isoleucine from 2-oxobutanoate: step 2/4. Its pathway is amino-acid biosynthesis; L-valine biosynthesis; L-valine from pyruvate: step 2/4. In terms of biological role, involved in the biosynthesis of branched-chain amino acids (BCAA). Catalyzes an alkyl-migration followed by a ketol-acid reduction of (S)-2-acetolactate (S2AL) to yield (R)-2,3-dihydroxy-isovalerate. In the isomerase reaction, S2AL is rearranged via a Mg-dependent methyl migration to produce 3-hydroxy-3-methyl-2-ketobutyrate (HMKB). In the reductase reaction, this 2-ketoacid undergoes a metal-dependent reduction by NADPH to yield (R)-2,3-dihydroxy-isovalerate. This is Ketol-acid reductoisomerase (NADP(+)) from Shewanella amazonensis (strain ATCC BAA-1098 / SB2B).